The primary structure comprises 322 residues: Transcriptional activator protein Pur-alpha (322 aa).

The tract at residues 1 to 55 is disordered; that stretch reads MADRDSGSEQGGAALGSGGSLGHPGSGSGSGGGGGGGGGGGGSGGGGGGAPGGLQ. Position 2 is an N-acetylalanine (Ala-2). The span at 9–52 shows a compositional bias: gly residues; that stretch reads EQGGAALGSGGSLGHPGSGSGSGGGGGGGGGGGGSGGGGGGAPG. The PUR repeat I repeat unit spans residues 60–125; sequence ELASKRVDIQ…DFIEHYAQLG (66 aa). Residues 142–213 form a PUR repeat II repeat; it reads ALKSEFLVRE…KLIDDYGVEE (72 aa). Ser-182 carries the phosphoserine modification. The PUR repeat III repeat unit spans residues 215–281; sequence PAELPEGTSL…CKYSEEMKKI (67 aa). Over residues 295–314 the composition is skewed to low complexity; that stretch reads LHQQQQQQQEETAAATLLLQ. Residues 295–322 form a disordered region; sequence LHQQQQQQQEETAAATLLLQGEEEGEED.

Belongs to the PUR DNA-binding protein family. Homodimer, heterodimer with PURB and heterotrimer with PURB and YBX1/Y-box protein 1. Interacts with FMR1; this interaction occurs in association with polyribosome.

The protein resides in the nucleus. In terms of biological role, this is a probable transcription activator that specifically binds the purine-rich single strand of the PUR element located upstream of the MYC gene. May play a role in the initiation of DNA replication and in recombination. The polypeptide is Transcriptional activator protein Pur-alpha (PURA) (Homo sapiens (Human)).